The sequence spans 73 residues: MNFLLSKLLLGLIRFYQYCISPLIPPRCRYTPTCSQYAVEAVKKYGAFKGGRLAIKRIARCHPFGGHGHDPVP.

This sequence belongs to the UPF0161 family.

It is found in the cell inner membrane. Could be involved in insertion of integral membrane proteins into the membrane. The chain is Putative membrane protein insertion efficiency factor from Neisseria meningitidis serogroup C (strain 053442).